The sequence spans 290 residues: Ribosomal RNA small subunit methyltransferase A (290 aa).

The S-adenosyl-L-methionine site is built by Asn27, Leu29, Gly54, Glu75, Asp100, and Asn125.

This sequence belongs to the class I-like SAM-binding methyltransferase superfamily. rRNA adenine N(6)-methyltransferase family. RsmA subfamily.

It localises to the cytoplasm. The catalysed reaction is adenosine(1518)/adenosine(1519) in 16S rRNA + 4 S-adenosyl-L-methionine = N(6)-dimethyladenosine(1518)/N(6)-dimethyladenosine(1519) in 16S rRNA + 4 S-adenosyl-L-homocysteine + 4 H(+). Its function is as follows. Specifically dimethylates two adjacent adenosines (A1518 and A1519) in the loop of a conserved hairpin near the 3'-end of 16S rRNA in the 30S particle. May play a critical role in biogenesis of 30S subunits. In Streptococcus pneumoniae (strain 70585), this protein is Ribosomal RNA small subunit methyltransferase A.